Reading from the N-terminus, the 348-residue chain is E3 ubiquitin-protein ligase MARCHF9 (348 aa).

Residues 48 to 96 (ARDGDGDEEEYYGSEPRARGLAGDKEPRAGPPPPPAPPPPPPGALDALS) are disordered. Positions 63-75 (PRARGLAGDKEPR) are enriched in basic and acidic residues. A compositionally biased stretch (pro residues) spans 76–90 (AGPPPPPAPPPPPPG). The RING-CH-type zinc-finger motif lies at 102–162 (DSGLRTPQCR…ELCYFKYQVL (61 aa)). Residues Cys-110, Cys-113, Cys-126, Cys-128, His-136, Cys-139, Cys-152, and Cys-155 each contribute to the Zn(2+) site. Helical transmembrane passes span 185 to 205 (IAAIVLGSLFLVASISWLIWS) and 219 to 239 (LFQICYGMYGFMDVVCIGLIV). 2 disordered regions span residues 272 to 304 (GDTGGGAAGKPGPRTSRTSPPAGAPTRPPAAQR) and 328 to 348 (PPDARSSSHSGREVVMRVTTV).

Homodimer.

The protein localises to the golgi apparatus membrane. It is found in the lysosome membrane. It carries out the reaction S-ubiquitinyl-[E2 ubiquitin-conjugating enzyme]-L-cysteine + [acceptor protein]-L-lysine = [E2 ubiquitin-conjugating enzyme]-L-cysteine + N(6)-ubiquitinyl-[acceptor protein]-L-lysine.. It participates in protein modification; protein ubiquitination. Functionally, E3 ubiquitin-protein ligase that may mediate ubiquitination of MHC-I, CD4 and ICAM1, and promote their subsequent endocytosis and sorting to lysosomes via multivesicular bodies. E3 ubiquitin ligases accept ubiquitin from an E2 ubiquitin-conjugating enzyme in the form of a thioester and then directly transfer the ubiquitin to targeted substrates. The chain is E3 ubiquitin-protein ligase MARCHF9 (Marchf9) from Mus musculus (Mouse).